The primary structure comprises 135 residues: Large ribosomal subunit protein uL16c (135 aa).

This sequence belongs to the universal ribosomal protein uL16 family. As to quaternary structure, part of the 50S ribosomal subunit.

It is found in the plastid. It localises to the chloroplast. This is Large ribosomal subunit protein uL16c from Panax ginseng (Korean ginseng).